Here is a 296-residue protein sequence, read N- to C-terminus: CDP-diacylglycerol--glycerol-3-phosphate 3-phosphatidyltransferase 1, chloroplastic/mitochondrial (296 aa).

A chloroplast and mitochondrion-targeting transit peptide spans 1 to 39 (MLRSGLASLIVDVNLRRTLRPSPTFSFPAHLSRCIITSR). A compositionally biased stretch (low complexity) spans 62 to 82 (FSSSSSSEQSRPTSSSRNSFS). Residues 62–103 (FSSSSSSEQSRPTSSSRNSFSGHGQLDSDDNSSPPPSQSSSK) form a disordered region. A run of 5 helical transmembrane segments spans residues 104–124 (VLTL…LLVA), 126–146 (FYVD…AAAI), 164–184 (FGAF…LILL), 189–209 (IQVA…IAII), and 261–281 (VGWL…LSVW).

It belongs to the CDP-alcohol phosphatidyltransferase class-I family. The cofactor is Mn(2+).

It is found in the plastid. The protein resides in the chloroplast membrane. The protein localises to the mitochondrion membrane. The enzyme catalyses a CDP-1,2-diacyl-sn-glycerol + sn-glycerol 3-phosphate = a 1,2-diacyl-sn-glycero-3-phospho-(1'-sn-glycero-3'-phosphate) + CMP + H(+). It participates in phospholipid metabolism; phosphatidylglycerol biosynthesis; phosphatidylglycerol from CDP-diacylglycerol: step 1/2. Functionally, catalyzes the committed step to the synthesis of the acidic phospholipids, including phosphatidylglycerol (PG). Transfers specifically a phosphatidyl group from CDP-diacylglycerol to glycerol-3-phosphate to form phosphatidylglycerophosphate. Cannot catalyze the phosphatidyl group transfer to inositol, serine, choline or phosphatidylglycerol. Possesses high activity with CDP-dipalmitoylglycerol and low activity with CDP-dioleoylglycerol. Essential for chloroplast differentiation and PG accumulation in thylakoids, an essential process for the assembly of antenna-reaction center complexes to optimize energy transfer from antenna pigments, and for subsequent photochemical efficiency of photosystem II (PSII). During cold acclimation (at 5 degrees Celsius), necessary for the photosystem I (PSI) photochemistry, including both reaction center and light-harvesting integrity. But dispensable in mitochondrion, being redundant with PGPS2 for the production of PG and its derivative cardiolipin (CL) in mitochondrial membranes. Together with PGPS2, required for the proper embryo development by providing PG accurate levels. The polypeptide is CDP-diacylglycerol--glycerol-3-phosphate 3-phosphatidyltransferase 1, chloroplastic/mitochondrial (Arabidopsis thaliana (Mouse-ear cress)).